The following is a 108-amino-acid chain: MNEARFHDLVDALQQQVEDAFDDSDLDLDLENAGGVLTVRFENGSQLILSRQAPLRQLWVAAKSGGFHFDYDEASGLWRHDGSQEPLGALLNRATLEQGGEDVEFPGL.

Belongs to the frataxin family.

Its function is as follows. Involved in iron-sulfur (Fe-S) cluster assembly. May act as a regulator of Fe-S biogenesis. The polypeptide is Iron-sulfur cluster assembly protein CyaY (Pseudomonas aeruginosa (strain ATCC 15692 / DSM 22644 / CIP 104116 / JCM 14847 / LMG 12228 / 1C / PRS 101 / PAO1)).